We begin with the raw amino-acid sequence, 1009 residues long: Mediator of RNA polymerase II transcription subunit 5 (1009 aa).

The protein belongs to the Mediator complex subunit 5 family. In terms of assembly, component of the Mediator complex.

It is found in the nucleus. Functionally, component of the Mediator complex, a coactivator involved in the regulated transcription of nearly all RNA polymerase II-dependent genes. Mediator functions as a bridge to convey information from gene-specific regulatory proteins to the basal RNA polymerase II transcription machinery. Mediator is recruited to promoters by direct interactions with regulatory proteins and serves as a scaffold for the assembly of a functional preinitiation complex with RNA polymerase II and the general transcription factors. This Neosartorya fischeri (strain ATCC 1020 / DSM 3700 / CBS 544.65 / FGSC A1164 / JCM 1740 / NRRL 181 / WB 181) (Aspergillus fischerianus) protein is Mediator of RNA polymerase II transcription subunit 5 (nut1).